The primary structure comprises 407 residues: Patatin-like protein 2 (407 aa).

In terms of domain architecture, PNPLA spans 22–228 (LSIDGGGIRG…AANNPALLAI (207 aa)). A GXGXXG motif is present at residues 26-31 (GGGIRG). Residues 64 to 68 (GTSTG) carry the GXSXG motif. The active-site Nucleophile is the Ser66. Catalysis depends on Asp215, which acts as the Proton acceptor. The DGA/G signature appears at 215 to 217 (DGG). Phosphoserine is present on Ser398.

It belongs to the patatin family. Expressed specifically in roots.

The protein localises to the cytoplasm. Possesses non-specific lipolytic acyl hydrolase (LAH) activity. Catalyzes the hydrolysis of the galactolipids monogalactosyldiacylglycerol (MGDG) and digalactosyldiacylglycerol (DGDG), and less efficiently the phoshpolipids phosphatidylcholine (PC), phosphatidylethanolamine (PE), phosphatidylglycerol (PG), phosphatidic acid (PA), phosphatidylserine (PS) and phosphatidylinositol (PI). Favors the release of fatty acid at the sn-1 position for PC or PE and the sn-2 position for PG, PA, PS and PI. Negatively affects disease resistance to the necrotic fungal pathogen Botrytis cinerea and the avirulent bacteria Pseudomonas syringae by promoting cell death and reducing the efficiency of the hypersensitive response, respectively. However, PLP2 contributes to resistance to cucumber mosaic virus (CMV), an obligate parasite inducing hypersensitive response. May negatively regulate oxylipin production, possibly via participating in membrane repair that includes removal of oxidatively modified lipids. This Arabidopsis thaliana (Mouse-ear cress) protein is Patatin-like protein 2 (PLP2).